We begin with the raw amino-acid sequence, 452 residues long: Friend leukemia integration 1 transcription factor (452 aa).

Residue Ser39 is modified to Phosphoserine. The 87-residue stretch at 112 to 198 (PPPPNMTTNE…SHLSYLRESS (87 aa)) folds into the PNT domain. Positions 209–271 (DQSSRLSVKE…PYQILGPTSS (63 aa)) are disordered. The span at 215-226 (SVKEDPSYDSVR) shows a compositional bias: basic and acidic residues. Polar residues predominate over residues 248–257 (QTISKNTEQR). The segment at residues 281-361 (IQLWQFLLEL…HGKRYAYKFD (81 aa)) is a DNA-binding region (ETS). A disordered region spans residues 433–452 (NPNVPRHPNTHVPSHLGSYY).

The protein belongs to the ETS family. As to quaternary structure, can form homodimers or heterodimers with ETV6/TEL1.

The protein localises to the nucleus. Functionally, sequence-specific transcriptional activator. Recognizes the DNA sequence 5'-C[CA]GGAAGT-3'. The protein is Friend leukemia integration 1 transcription factor (FLI1) of Homo sapiens (Human).